A 396-amino-acid chain; its full sequence is 12-oxophytodienoate reductase 3 (396 aa).

FMN-binding positions include 31-33 (PMT), G64, and Q106. Residue 185–188 (HGAH) coordinates substrate. Catalysis depends on Y190, which acts as the Proton donor. R237 contacts FMN. R283 contacts substrate. FMN contacts are provided by residues G321 and 342 to 343 (GR). An FMN region spans residues 342–343 (GR). The Microbody targeting signal signature appears at 394-396 (SRL).

The protein belongs to the NADH:flavin oxidoreductase/NADH oxidase family. Requires FMN as cofactor. As to expression, expressed in roots and to a lower extent in leaves and flowers.

It is found in the peroxisome. The catalysed reaction is (1S,2S)-OPC-8 + NADP(+) = (9S,13S,15Z)-12-oxophyto-10,15-dienoate + NADPH + H(+). Its pathway is lipid metabolism; oxylipin biosynthesis. Its function is as follows. Specifically cleaves olefinic bonds in cyclic enones. Involved in the biosynthesis of jasmonic acid (JA) and perhaps in biosynthesis or metabolism of other oxylipin signaling moleclules. It is required for the spatial and temporal regulation of JA levels during dehiscence of anthers, promoting the stomium degeneration program. In vitro, reduces 9S,13S-12-oxophytodienoic acid (9S,13S-OPDA) and 9R,13R-OPDA to 9S,13S-OPC-8:0 and 9R,13R-OPC-8:0, respectively. The polypeptide is 12-oxophytodienoate reductase 3 (OPR3) (Solanum lycopersicum (Tomato)).